The sequence spans 456 residues: MGKLFGTFGVRGIANEEITPEFALKIGMAFGTLLKREGRERPLVVVGRDTRVSGEMLKDALISGLLSTGCDVIDVGIAPTPAIQWATNHFNADGGAVITASHNPPEYNGIKLLEPNGMGLKKEREAIVEELFFSEDFHRAKWNEIGELRKEDIIKPYIEAIKNRVDVEAIKKRRPFVVVDTSNGAGSLTLPYLLRELGCKVVSVNAHPDGHFPARNPEPNEENLKGFMEIVKALGADFGVAQDGDADRAVFIDENGRFIQGDKTFALVADAVLRENGGGLLVTTIATSNLLDDIAKRNGAKVMRTKVGDLIVARALLENNGTIGGEENGGVIFPDFVLGRDGAMTTAKIVEIFAKSGKKFSELIDELPKYYQFKTKRHVEGDRKAIVAKVAELAEKKGYKIDTTDGTKIIFDDGWVLVRASGTEPIIRIFSEAKSEEKAREYLELGIKLLEEALKG.

The active-site Phosphoserine intermediate is the serine 101. Residues serine 101, aspartate 243, aspartate 245, and aspartate 247 each contribute to the Mg(2+) site. Serine 101 carries the phosphoserine; by autocatalysis modification.

This sequence belongs to the phosphohexose mutase family. Homotetramer. Requires Mg(2+) as cofactor. Activated by phosphorylation.

It catalyses the reaction alpha-D-glucose 1-phosphate = alpha-D-glucose 6-phosphate. The enzyme catalyses alpha-D-mannose 1-phosphate = D-mannose 6-phosphate. Catalyzes the interconversion of glucose 1-phosphate and glucose 6-phosphate, and the interconversion of mannose 1-phosphate and mannose 6-phosphate. Also displays low activity with deoxyribose 1-phosphate and glucosamine 1-phosphate. In Thermococcus kodakarensis (strain ATCC BAA-918 / JCM 12380 / KOD1) (Pyrococcus kodakaraensis (strain KOD1)), this protein is Phosphoglucomutase/phosphomannomutase.